Here is a 156-residue protein sequence, read N- to C-terminus: Organelle RRM domain-containing protein 2, mitochondrial (156 aa).

A mitochondrion-targeting transit peptide spans 1-28 (MAMAMRLPAISRAVTEVASAPVGLRRLF). The RRM domain maps to 56 to 134 (TNLFVSGLSK…WVIFAEYARP (79 aa)). Phosphoserine is present on Ser64. Residues 137–148 (QSQSYQPQNNMS) are compositionally biased toward polar residues. Positions 137–156 (QSQSYQPQNNMSRPPYYGNR) are disordered.

In terms of assembly, interacts with RBG3/ORRM3. Binds to RBG2/ORRM5.

The protein localises to the mitochondrion. Functionally, involved in C-to-U editing of mitochondrial RNA. Functions as minor mitochondrial editing factor. Controls 6 percent of the mitochondrial editing sites. The sequence is that of Organelle RRM domain-containing protein 2, mitochondrial from Arabidopsis thaliana (Mouse-ear cress).